A 462-amino-acid chain; its full sequence is Multidrug resistance protein NorM (462 aa).

A run of 11 helical transmembrane segments spans residues 56 to 76, 99 to 119, 147 to 167, 172 to 192, 202 to 222, 247 to 267, 280 to 300, 325 to 345, 361 to 381, 402 to 422, and 430 to 450; these read LAAGGLGANFFFVIVTVLQGV, IYWTGFVLSVLLAIPAVVALS, FAALGSLIGVGLMRAFLPAIG, LLWVSIGGIGVNAVLNYGLIH, FLGSAVATTITIWLTAFALIW, LIGIGWPVAITYGVESTLFLA, LAAHQIALNVASVAFMVPLAI, FVALGLGVAFMSLSGLVLILA, NAATVSLAASLLGIAAVFQIV, MLAATFGYWGIGFPTGYWLAF, and GLWWGLAAGLASVAVLMAWRF.

Belongs to the multi antimicrobial extrusion (MATE) (TC 2.A.66.1) family.

The protein resides in the cell inner membrane. Functionally, multidrug efflux pump. Confers probably resistance to the cationic peptide polymyxin B (PMB). In Burkholderia vietnamiensis, this protein is Multidrug resistance protein NorM (norM).